The chain runs to 2430 residues: Protein TASOR 2 (2430 aa).

Phosphoserine occurs at positions 19, 219, and 384. Disordered stretches follow at residues 416 to 488 and 577 to 648; these read LDRK…GETA and RGTS…SQSS. Serine 685 is subject to Phosphoserine. The disordered stretch occupies residues 704-727; it reads LLLQQKPPDDPVVKPKDRPPSARV. Basic and acidic residues predominate over residues 710–723; the sequence is PPDDPVVKPKDRPP. Phosphoserine occurs at positions 1025, 1087, and 1172. The segment at 1331–1360 is disordered; that stretch reads LTESREVSSADNVSVYPSVSEEPVENKERK. Residue serine 1541 is modified to Phosphoserine. The disordered stretch occupies residues 1700-1727; it reads EAELHKETTGPGTAGPQSNTTSSLKGER. The segment covering 1714–1723 has biased composition (polar residues); it reads GPQSNTTSSL. Serine 1848 carries the phosphoserine modification. A Glycyl lysine isopeptide (Lys-Gly) (interchain with G-Cter in SUMO2) cross-link involves residue lysine 2007. Phosphoserine is present on residues serine 2009, serine 2037, serine 2062, and serine 2066. Positions 2046–2069 are disordered; the sequence is SDPRPQGQPRRGYTASSLDSSSSW.

It belongs to the TASOR family.

This chain is Protein TASOR 2, found in Homo sapiens (Human).